Consider the following 102-residue polypeptide: MILKTRWYDLDDGDDGIPVDRVDWNGCSEDTKKRLIREFRMGYQAAKPFTVTDDKFVCIQNGRAKLTNADWFTDKKVLLWYIISLPISSFVFYFFIKIQWTE.

This is an uncharacterized protein from Escherichia coli (Bacteriophage T4).